A 336-amino-acid chain; its full sequence is Pyridoxal 5'-phosphate synthase subunit PdxS (336 aa).

Aspartate 62 is a D-ribose 5-phosphate binding site. The active-site Schiff-base intermediate with D-ribose 5-phosphate is the lysine 119. Glycine 191 provides a ligand contact to D-ribose 5-phosphate. Lysine 203 serves as a coordination point for D-glyceraldehyde 3-phosphate. D-ribose 5-phosphate-binding positions include glycine 254 and 275–276; that span reads GS.

This sequence belongs to the PdxS/SNZ family. In the presence of PdxT, forms a dodecamer of heterodimers.

It catalyses the reaction aldehydo-D-ribose 5-phosphate + D-glyceraldehyde 3-phosphate + L-glutamine = pyridoxal 5'-phosphate + L-glutamate + phosphate + 3 H2O + H(+). It participates in cofactor biosynthesis; pyridoxal 5'-phosphate biosynthesis. Its function is as follows. Catalyzes the formation of pyridoxal 5'-phosphate from ribose 5-phosphate (RBP), glyceraldehyde 3-phosphate (G3P) and ammonia. The ammonia is provided by the PdxT subunit. Can also use ribulose 5-phosphate and dihydroxyacetone phosphate as substrates, resulting from enzyme-catalyzed isomerization of RBP and G3P, respectively. This chain is Pyridoxal 5'-phosphate synthase subunit PdxS, found in Pyrobaculum calidifontis (strain DSM 21063 / JCM 11548 / VA1).